The sequence spans 74 residues: Exodeoxyribonuclease 7 small subunit (74 aa).

This sequence belongs to the XseB family. As to quaternary structure, heterooligomer composed of large and small subunits.

It localises to the cytoplasm. It carries out the reaction Exonucleolytic cleavage in either 5'- to 3'- or 3'- to 5'-direction to yield nucleoside 5'-phosphates.. Bidirectionally degrades single-stranded DNA into large acid-insoluble oligonucleotides, which are then degraded further into small acid-soluble oligonucleotides. This chain is Exodeoxyribonuclease 7 small subunit, found in Thermotoga neapolitana (strain ATCC 49049 / DSM 4359 / NBRC 107923 / NS-E).